Here is a 331-residue protein sequence, read N- to C-terminus: Ferrochelatase (331 aa).

Positions 187 and 286 each coordinate Fe cation.

Belongs to the ferrochelatase family.

It is found in the cytoplasm. It catalyses the reaction heme b + 2 H(+) = protoporphyrin IX + Fe(2+). It participates in porphyrin-containing compound metabolism; protoheme biosynthesis; protoheme from protoporphyrin-IX: step 1/1. Its function is as follows. Catalyzes the ferrous insertion into protoporphyrin IX. This chain is Ferrochelatase, found in Legionella pneumophila (strain Corby).